The sequence spans 602 residues: Elongation factor 4 (602 aa).

One can recognise a tr-type G domain in the interval 7 to 188 (ENIRNFSIIA…AIIELIPPPK (182 aa)). GTP contacts are provided by residues 19-24 (DHGKST) and 135-138 (NKID).

This sequence belongs to the TRAFAC class translation factor GTPase superfamily. Classic translation factor GTPase family. LepA subfamily.

It is found in the cell inner membrane. It catalyses the reaction GTP + H2O = GDP + phosphate + H(+). Its function is as follows. Required for accurate and efficient protein synthesis under certain stress conditions. May act as a fidelity factor of the translation reaction, by catalyzing a one-codon backward translocation of tRNAs on improperly translocated ribosomes. Back-translocation proceeds from a post-translocation (POST) complex to a pre-translocation (PRE) complex, thus giving elongation factor G a second chance to translocate the tRNAs correctly. Binds to ribosomes in a GTP-dependent manner. The chain is Elongation factor 4 from Chlamydia caviae (strain ATCC VR-813 / DSM 19441 / 03DC25 / GPIC) (Chlamydophila caviae).